A 302-amino-acid chain; its full sequence is GTP cyclohydrolase FolE2 (302 aa).

Residues 1-27 (MPKKQLPPKEERHKLFGSVPPKERTKP) form a disordered region.

This sequence belongs to the GTP cyclohydrolase IV family.

It carries out the reaction GTP + H2O = 7,8-dihydroneopterin 3'-triphosphate + formate + H(+). It participates in cofactor biosynthesis; 7,8-dihydroneopterin triphosphate biosynthesis; 7,8-dihydroneopterin triphosphate from GTP: step 1/1. Converts GTP to 7,8-dihydroneopterin triphosphate. This Oceanobacillus iheyensis (strain DSM 14371 / CIP 107618 / JCM 11309 / KCTC 3954 / HTE831) protein is GTP cyclohydrolase FolE2.